We begin with the raw amino-acid sequence, 291 residues long: ATP synthase gamma chain (291 aa).

It belongs to the ATPase gamma chain family. F-type ATPases have 2 components, CF(1) - the catalytic core - and CF(0) - the membrane proton channel. CF(1) has five subunits: alpha(3), beta(3), gamma(1), delta(1), epsilon(1). CF(0) has three main subunits: a, b and c.

The protein localises to the cell inner membrane. Functionally, produces ATP from ADP in the presence of a proton gradient across the membrane. The gamma chain is believed to be important in regulating ATPase activity and the flow of protons through the CF(0) complex. The sequence is that of ATP synthase gamma chain from Persephonella marina (strain DSM 14350 / EX-H1).